The primary structure comprises 364 residues: Leucine-rich repeat-containing protein 19 (364 aa).

The first 20 residues, 1–20 (MKVTRFMFWLFSMLLPSVKS), serve as a signal peptide directing secretion. Residues 21–264 (QASETEVPCN…SEHEPLGKSW (244 aa)) are Extracellular-facing. N-linked (GlcNAc...) asparagine glycans are attached at residues Asn-30, Asn-35, Asn-46, and Asn-88. 6 LRR repeats span residues 44–69 (STNV…VLQM), 70–93 (YSLL…SFRN), 94–117 (LLNL…SFVG), 118–141 (LNEL…TFVP), 143–163 (NNLK…APQL), and 164–190 (PHLE…NWLN). Residues 174–225 (NPWNCTCGLLELHNWLNTSNVTLENENMTMCSYPDELKHDSIKSAPFTTECH) form the LRRCT domain. Residues Asn-177, Asn-190, Asn-193, Asn-200, Asn-241, Asn-245, and Asn-250 are each glycosylated (N-linked (GlcNAc...) asparagine). Residues 265-285 (AFLVGVVATVLLTSLLIFIAI) form a helical membrane-spanning segment. At 286–364 (KCPVWYNILL…IDINEVHEEK (79 aa)) the chain is on the cytoplasmic side.

Interacts with TRAF2 and TRAF6. Strongly expressed in kidney, also expressed in spleen, intestine and colon. Highly expressed in epithelial cells. In kidney, mainly expressed in renal collecting duct epithelial cells.

It localises to the membrane. With respect to regulation, activated by TLR ligands such as LPS, bacterial DNA and peptidoglycan. Functionally, pathogen-recognition receptor which mediates the activation of TRAF2- and TRAF6 NF-kappa-B signaling pathways and induces the expression of pro-inflammatory cytokines. In kidney, prevents infection by uropathogenic bacteria by inducing the production of cytokines, chemokines and antimicrobial substances. In gut, involved in host-microbiota interactions, plays a critical role in promoting the recruitment of immune cells and intestinal inflammation. The sequence is that of Leucine-rich repeat-containing protein 19 from Mus musculus (Mouse).